A 329-amino-acid polypeptide reads, in one-letter code: tRNA dimethylallyltransferase (329 aa).

12-19 provides a ligand contact to ATP; it reads GPTSVGKT. 14 to 19 is a substrate binding site; that stretch reads TSVGKT. The segment at 37 to 40 is interaction with substrate tRNA; sequence DSRY. A disordered region spans residues 306-329; sequence LREESDEGDVAVHQSGGGKEAPRA. Residues 320–329 show a composition bias toward gly residues; it reads SGGGKEAPRA.

The protein belongs to the IPP transferase family. Monomer. The cofactor is Mg(2+).

It carries out the reaction adenosine(37) in tRNA + dimethylallyl diphosphate = N(6)-dimethylallyladenosine(37) in tRNA + diphosphate. In terms of biological role, catalyzes the transfer of a dimethylallyl group onto the adenine at position 37 in tRNAs that read codons beginning with uridine, leading to the formation of N6-(dimethylallyl)adenosine (i(6)A). The protein is tRNA dimethylallyltransferase of Thermomicrobium roseum (strain ATCC 27502 / DSM 5159 / P-2).